Reading from the N-terminus, the 224-residue chain is Putative adhesin A1C_06425 (224 aa).

The first 22 residues, 1-22 (MKKLLLIATTSATILSSSISFA), serve as a signal peptide directing secretion.

In Rickettsia akari (strain Hartford), this protein is Putative adhesin A1C_06425.